A 93-amino-acid polypeptide reads, in one-letter code: Integration host factor subunit beta (93 aa).

Belongs to the bacterial histone-like protein family. Heterodimer of an alpha and a beta chain.

Its function is as follows. This protein is one of the two subunits of integration host factor, a specific DNA-binding protein that functions in genetic recombination as well as in transcriptional and translational control. This chain is Integration host factor subunit beta, found in Rhodospirillum centenum (strain ATCC 51521 / SW).